The primary structure comprises 357 residues: Cytochrome c peroxidase, mitochondrial (357 aa).

The N-terminal 23 residues, 1 to 23 (MSATALRIAPIASRTFQRRLGYL), are a transit peptide targeting the mitochondrion. Catalysis depends on H116, which acts as the Proton acceptor. Positions 189–212 (PWRSGRTDLPEDMTPDNGRLPDGD) are disordered. H239 lines the heme b pocket. Residue W255 is the Tryptophan radical intermediate of the active site.

Belongs to the peroxidase family. Cytochrome c peroxidase subfamily. In terms of assembly, forms a one-to-one complex with cytochrome c. It depends on heme b as a cofactor.

The protein resides in the mitochondrion matrix. It localises to the mitochondrion intermembrane space. The enzyme catalyses 2 Fe(II)-[cytochrome c] + H2O2 + 2 H(+) = 2 Fe(III)-[cytochrome c] + 2 H2O. Destroys radicals which are normally produced within the cells and which are toxic to biological systems. This Candida glabrata (strain ATCC 2001 / BCRC 20586 / JCM 3761 / NBRC 0622 / NRRL Y-65 / CBS 138) (Yeast) protein is Cytochrome c peroxidase, mitochondrial.